The chain runs to 270 residues: Putative pyruvate, phosphate dikinase regulatory protein (270 aa).

151–158 (GVSRTSKT) contacts ADP.

The protein belongs to the pyruvate, phosphate/water dikinase regulatory protein family. PDRP subfamily.

It catalyses the reaction N(tele)-phospho-L-histidyl/L-threonyl-[pyruvate, phosphate dikinase] + ADP = N(tele)-phospho-L-histidyl/O-phospho-L-threonyl-[pyruvate, phosphate dikinase] + AMP + H(+). The enzyme catalyses N(tele)-phospho-L-histidyl/O-phospho-L-threonyl-[pyruvate, phosphate dikinase] + phosphate + H(+) = N(tele)-phospho-L-histidyl/L-threonyl-[pyruvate, phosphate dikinase] + diphosphate. Functionally, bifunctional serine/threonine kinase and phosphorylase involved in the regulation of the pyruvate, phosphate dikinase (PPDK) by catalyzing its phosphorylation/dephosphorylation. This is Putative pyruvate, phosphate dikinase regulatory protein from Streptococcus gordonii (strain Challis / ATCC 35105 / BCRC 15272 / CH1 / DL1 / V288).